We begin with the raw amino-acid sequence, 956 residues long: Transient receptor potential channel pyrexia (956 aa).

Residues 1-491 (MENVRFSIIE…LFLKWRRIRK (491 aa)) lie on the Cytoplasmic side of the membrane. ANK repeat units lie at residues 132-161 (RGRTPLHFACCRANAPIAKVLLDFGADPNR), 166-195 (KEVTSLHCAASSKSVECILLLLRRKASINI), 198-227 (EKRSALHYAIDVNAVDCVEILLKYGADPNT), 231-260 (YTETPLHTASAAGFAKCVQLLLSHNADVRS), 265-294 (GKVTALHLAAENDYVECARLLLEHRAEVDC), 298-327 (SHQTPLHLACLSQSIGTVDLLISYGANVNA), 331-362 (DGRTALHAAIVKQSRSLDCCNALLKAGADVNK), and 366-395 (YGYTPLHIAALNEFSSCVYTFIEHGADITA). A helical membrane pass occupies residues 492 to 512 (FFLMSLAYHTLFVILFTFYVI). The Extracellular segment spans residues 513 to 525 (WVYVRCCKKEELC). The chain crosses the membrane as a helical span at residues 526 to 546 (VAPGYVSTIGYLVIILNLILL). At 547-565 (GKEVFQMAHGLRGYAKYWE) the chain is on the cytoplasmic side. The chain crosses the membrane as a helical span at residues 566–584 (NWLQWTIGTGVLLCVTPET). Topologically, residues 585-601 (VRTDDLTAVPVWQHHVA) are extracellular. Residues 602 to 622 (AIVILLVWLELMMLVGRFPIF) form a helical membrane-spanning segment. Topologically, residues 623 to 638 (GVYVQMFTKVAVNFAK) are cytoplasmic. The chain crosses the membrane as a helical span at residues 639 to 659 (FLLAYICLLVAFGLSFAVLFN). Over 660-701 (DYPAFENITWSFLKSITMMSGELEFEDIFYGDYAVKFPVTAH) the chain is Extracellular. An N-linked (GlcNAc...) asparagine glycan is attached at Asn666. The helical transmembrane segment at 702–722 (IIFLSFVLLVTVILTNLMVGL) threads the bilayer. Residues 723–956 (AVSDIQGLQV…VASSHIRRHR (234 aa)) are Cytoplasmic-facing.

Belongs to the transient receptor (TC 1.A.4) family. STrpC subfamily. Homooligomer; between isoform A and isoform B. In terms of tissue distribution, expressed in various peripheral nerves and the central nerves in embryos. In adults, it is expressed in sensory neurons lying beneath the bristles around eyes, neurons innervating the bristles on the back of thorax and neurons in maxillary palps, proboscis and antennae. Expressed in multidendritic neurons, which mediate temperature sensing, as well as non-multidendritic neurons in larval epidermis. Localizes ubiquitously throughout neurites.

It localises to the membrane. Its function is as follows. Receptor-activated non-selective cation channel involved in protection or tolerance from high temperature stress. Activated by temperatures above 40 degrees Celsius. More permeable to K(+) than to Na(+). May act in stress protection allow flies to survive in natural environments. This Drosophila melanogaster (Fruit fly) protein is Transient receptor potential channel pyrexia (pyx).